The primary structure comprises 583 residues: MSNSNFSIEEHFPDMWDAIMHDWLADSSSANPDPDLPVISPKQRSLLRKVTPVGLMGRIVVLETPNKWTKESIEKDLIDPIKHVLKTRLDLSVSLAITSTNGESENRAEAADDSHTRVDAVGDTHEGASQKGSVATADDLSMSQVEELVNKAEQRDGASQAGVSSAAETAEEAARRREHDADELAGQYSATENHIDPNPSPTPTRWTNKETAHRPAPRHTSPHTPSPQPSSSFNDGLDGESLLNKNYTFENFVVGSSNNFAAAACRAVAEAPAKAYNPLFIWGESGLGKTHLLHAIGHYAKELQPNMRVKYVSSEELTNDFINSIANDTRESFKRRYRNLDMLIVDDIQFLQNKESTQEEFFHTFNALHQANKQIVLSSDRPPRQLTTLEDRLRTRFEGGLITDVQTPDLETRIAILTKKAESDNVQLPEDVKVLIASRYEKSIRELDGALIRVTAYCALSHEPLTVETAEIALRDISPADQDVEIVPQHVIEVVANYFNLTTDELVGKGRAKKFVQARQIAMYLCRELTDLSLPKLGSAFGGRDHTTVMYAERRVRESLSENKKVFDQVQELTQKIKSHARD.

Positions methionine 1 to leucine 91 are domain I, interacts with DnaA modulators. A domain II region spans residues leucine 91–serine 241. The tract at residues lysine 151–glycine 239 is disordered. Basic and acidic residues predominate over residues glutamate 172 to aspartate 182. Residues leucine 242–cysteine 458 are domain III, AAA+ region. 4 residues coordinate ATP: glycine 286, glycine 288, lysine 289, and threonine 290. A domain IV, binds dsDNA region spans residues alanine 459–aspartate 583.

It belongs to the DnaA family. Oligomerizes as a right-handed, spiral filament on DNA at oriC.

It is found in the cytoplasm. Its function is as follows. Plays an essential role in the initiation and regulation of chromosomal replication. ATP-DnaA binds to the origin of replication (oriC) to initiate formation of the DNA replication initiation complex once per cell cycle. Binds the DnaA box (a 9 base pair repeat at the origin) and separates the double-stranded (ds)DNA. Forms a right-handed helical filament on oriC DNA; dsDNA binds to the exterior of the filament while single-stranded (ss)DNA is stabiized in the filament's interior. The ATP-DnaA-oriC complex binds and stabilizes one strand of the AT-rich DNA unwinding element (DUE), permitting loading of DNA polymerase. After initiation quickly degrades to an ADP-DnaA complex that is not apt for DNA replication. Binds acidic phospholipids. This is Chromosomal replication initiator protein DnaA from Corynebacterium jeikeium (strain K411).